Here is a 183-residue protein sequence, read N- to C-terminus: Cell division protein ZapC (183 aa).

This sequence belongs to the ZapC family. As to quaternary structure, interacts directly with FtsZ.

The protein localises to the cytoplasm. Functionally, contributes to the efficiency of the cell division process by stabilizing the polymeric form of the cell division protein FtsZ. Acts by promoting interactions between FtsZ protofilaments and suppressing the GTPase activity of FtsZ. This is Cell division protein ZapC from Proteus mirabilis (strain HI4320).